The following is a 741-amino-acid chain: Melanoma-associated antigen D4 (741 aa).

Residues 1-13 show a composition bias toward polar residues; the sequence is MAEGSFSVQSESY. 4 disordered regions span residues 1 to 27, 136 to 206, 247 to 296, and 323 to 379; these read MAEG…EVGE, RVAT…EGPS, MAFP…KALA, and PEGA…QPSL. The span at 14 to 27 shows a compositional bias: acidic residues; the sequence is SVEDMDEGSDEVGE. Polar residues-rich tracts occupy residues 140 to 151 and 187 to 196; these read PQVSGEDTQPTT and TSAQSQTGSP. Residues 354–363 show a composition bias toward acidic residues; the sequence is DEYESSEEER. The MAGE domain maps to 413-611; that stretch reads LQERANKLVK…REWKAHFLEA (199 aa). Residues 700–720 are disordered; sequence VSSGTNGGASTSVLDGPSTSS. Residues 701–720 show a composition bias toward polar residues; it reads SSGTNGGASTSVLDGPSTSS.

As to quaternary structure, interacts with TRIM27. In terms of tissue distribution, expressed only in brain and ovary among normal tissues. Isoform 1 and isoform 2 are specifically expressed in glioma cells among cancer cells. Detected in some renal cell carcinoma samples.

Functionally, may enhance ubiquitin ligase activity of RING-type zinc finger-containing E3 ubiquitin-protein ligases. Proposed to act through recruitment and/or stabilization of the Ubl-conjugating enzyme (E2) at the E3:substrate complex. This is Melanoma-associated antigen D4 (MAGED4) from Homo sapiens (Human).